The following is a 215-amino-acid chain: Pyrophosphatase PpaX (215 aa).

Asp9 acts as the Nucleophile in catalysis.

This sequence belongs to the HAD-like hydrolase superfamily. PpaX family. It depends on Mg(2+) as a cofactor.

It catalyses the reaction diphosphate + H2O = 2 phosphate + H(+). Its function is as follows. Hydrolyzes pyrophosphate formed during P-Ser-HPr dephosphorylation by HPrK/P. Might play a role in controlling the intracellular pyrophosphate pool. The chain is Pyrophosphatase PpaX from Bacillus mycoides (strain KBAB4) (Bacillus weihenstephanensis).